A 71-amino-acid polypeptide reads, in one-letter code: UPF0435 protein SERP1418 (71 aa).

The protein belongs to the UPF0435 family.

In Staphylococcus epidermidis (strain ATCC 35984 / DSM 28319 / BCRC 17069 / CCUG 31568 / BM 3577 / RP62A), this protein is UPF0435 protein SERP1418.